Here is a 270-residue protein sequence, read N- to C-terminus: Interleukin-33 (270 aa).

The tract at residues 1 to 65 is homeodomain-like HTH domain; that stretch reads MKPKMKYSTN…EACYFRRETT (65 aa). The propeptide occupies 1-94; it reads MKPKMKYSTN…CQQQSTVECF (94 aa). The interaction with RELA stretch occupies residues 64–111; the sequence is TTKRPSLKTGRKHKRHLVLAACQQQSTVECFAFGISGVQKYTRALHDS.

It belongs to the IL-1 family. Highly divergent. Forms a 1:1:1 heterotrimeric complex with its primary high-affinity receptor IL1RL1 and the coreceptor IL1RAP. Interacts with cargo receptor TMED10; the interaction mediates the translocation from the cytoplasm into the ERGIC (endoplasmic reticulum-Golgi intermediate compartment) and thereby secretion. In terms of assembly, (Microbial infection) Interacts (in reduced form) with H.polygyrus ARI. The full-length protein can be released from cells and is able to signal via the IL1RL1/ST2 receptor. However, proteolytic processing by CELA1, CSTG/cathepsin G and ELANE/neutrophil elastase produces C-terminal peptides that are more active than the unprocessed full length protein. May also be proteolytically processed by calpains. Proteolytic cleavage mediated by apoptotic caspases including CASP3 and CASP7 results in IL33 inactivation. In vitro proteolytic cleavage by CASP1 was reported but could not be confirmed in vivo suggesting that IL33 is probably not a direct substrate for that caspase. In terms of tissue distribution, expressed at high level in high endothelial venules found in tonsils, Peyer patches and mesenteric lymph nodes. Almost undetectable in placenta.

The protein resides in the nucleus. Its subcellular location is the chromosome. It is found in the cytoplasm. It localises to the cytoplasmic vesicle. The protein localises to the secretory vesicle. The protein resides in the secreted. Cytokine that binds to and signals through the IL1RL1/ST2 receptor which in turn activates NF-kappa-B and MAPK signaling pathways in target cells. Involved in the maturation of Th2 cells inducing the secretion of T-helper type 2-associated cytokines. Also involved in activation of mast cells, basophils, eosinophils and natural killer cells. Acts as an enhancer of polarization of alternatively activated macrophages. Acts as a chemoattractant for Th2 cells, and may function as an 'alarmin', that amplifies immune responses during tissue injury. Induces rapid UCP2-dependent mitochondrial rewiring that attenuates the generation of reactive oxygen species and preserves the integrity of Krebs cycle required for persistent production of itaconate and subsequent GATA3-dependent differentiation of inflammation-resolving alternatively activated macrophages. Functionally, in quiescent endothelia the uncleaved form is constitutively and abundantly expressed, and acts as a chromatin-associated nuclear factor with transcriptional repressor properties, it may sequester nuclear NF-kappaB/RELA, lowering expression of its targets. This form is rapidely lost upon angiogenic or pro-inflammatory activation. This is Interleukin-33 from Homo sapiens (Human).